Consider the following 490-residue polypeptide: Probable cytosol aminopeptidase (490 aa).

Mn(2+) contacts are provided by Lys-260 and Asp-265. Lys-272 is an active-site residue. Residues Asp-284, Asp-343, and Glu-345 each coordinate Mn(2+). Residue Arg-347 is part of the active site.

It belongs to the peptidase M17 family. The cofactor is Mn(2+).

The protein localises to the cytoplasm. The enzyme catalyses Release of an N-terminal amino acid, Xaa-|-Yaa-, in which Xaa is preferably Leu, but may be other amino acids including Pro although not Arg or Lys, and Yaa may be Pro. Amino acid amides and methyl esters are also readily hydrolyzed, but rates on arylamides are exceedingly low.. It catalyses the reaction Release of an N-terminal amino acid, preferentially leucine, but not glutamic or aspartic acids.. In terms of biological role, presumably involved in the processing and regular turnover of intracellular proteins. Catalyzes the removal of unsubstituted N-terminal amino acids from various peptides. The sequence is that of Probable cytosol aminopeptidase from Gloeothece citriformis (strain PCC 7424) (Cyanothece sp. (strain PCC 7424)).